The chain runs to 137 residues: DNA polymerase III subunit psi (137 aa).

Belongs to the DNA polymerase III psi/HolD chain family. As to quaternary structure, the DNA polymerase III holoenzyme complex contains at least 10 different subunits organized into 3 functionally essential subassemblies: the Pol III core, the beta sliding clamp processivity factor and the clamp-loading complex. The Pol III core (subunits alpha, epsilon and theta) contains the polymerase and the 3'-5' exonuclease proofreading activities. The polymerase is tethered to the template via the dimeric beta sliding clamp processivity factor. The clamp-loading complex (also called gamma complex) assembles the beta sliding clamp onto the primed template and plays a central role in the organization and communication at the replication fork. The clamp-loading complex contains delta, delta', psi and chi, and 3 copies of either or both of two different DnaX proteins, gamma and tau. The DNA replisome complex has a single clamp loader (3 tau and 1 each of delta, delta', psi and chi subunits) which binds 3 Pol III cores (1 core on the leading strand and 2 on the lagging strand) each with a beta sliding clamp dimer. Additional proteins in the replisome are other copies of gamma, psi (this protein) and chi (holC), SSB, DNA helicase and RNA primase. The clamp loader hydrolyzes ATP to assemble the beta processivity factor onto the primed template and plays a central role in the organization and communication at the replication fork. Interacts directly with the chi subunit (holC).

It catalyses the reaction DNA(n) + a 2'-deoxyribonucleoside 5'-triphosphate = DNA(n+1) + diphosphate. Its function is as follows. Part of the beta sliding clamp loading complex, which hydrolyzes ATP to load the beta clamp onto primed DNA to form the DNA replication pre-initiation complex. DNA polymerase III is a complex, multichain enzyme responsible for most of the replicative synthesis in bacteria. This DNA polymerase also exhibits 3' to 5' exonuclease activity. In Escherichia coli (strain K12), this protein is DNA polymerase III subunit psi.